The primary structure comprises 643 residues: Alpha-dioxygenase PIOX (643 aa).

Residue His168 is the Proton acceptor of the active site. Asp169 lines the Ca(2+) pocket. A heme b-binding site is contributed by His173. Residues Thr221, Trp223, Asp225, and Ser227 each coordinate Ca(2+). Heme b contacts are provided by His393, Arg490, and Arg494.

The protein belongs to the peroxidase family. Heme b is required as a cofactor. Ca(2+) serves as cofactor.

The catalysed reaction is hexadecanoate + O2 = (2R)-2-hydroperoxyhexadecanoate. It catalyses the reaction dodecanoate + O2 = (2R)-2-hydroperoxydodecanoate. In terms of biological role, alpha-dioxygenase that catalyzes the primary oxygenation step of a variety of 14-20 carbon fatty acids, containing up to three unsaturated bonds, into their corresponding 2R-hydroperoxides. Involved in the production of oxylipins that function in cell signaling, wound healing, and protection from infection. The alpha-oxidation pathway of fatty acids may play a role during plant developmental processes. The protein is Alpha-dioxygenase PIOX of Pisum sativum (Garden pea).